A 229-amino-acid polypeptide reads, in one-letter code: Putative N-acetylmannosamine-6-phosphate 2-epimerase (229 aa).

This sequence belongs to the NanE family.

The enzyme catalyses an N-acyl-D-glucosamine 6-phosphate = an N-acyl-D-mannosamine 6-phosphate. It participates in amino-sugar metabolism; N-acetylneuraminate degradation; D-fructose 6-phosphate from N-acetylneuraminate: step 3/5. Converts N-acetylmannosamine-6-phosphate (ManNAc-6-P) to N-acetylglucosamine-6-phosphate (GlcNAc-6-P). The protein is Putative N-acetylmannosamine-6-phosphate 2-epimerase of Escherichia coli O127:H6 (strain E2348/69 / EPEC).